A 37-amino-acid polypeptide reads, in one-letter code: Large ribosomal subunit protein bL36 (37 aa).

Belongs to the bacterial ribosomal protein bL36 family.

The chain is Large ribosomal subunit protein bL36 from Halalkalibacterium halodurans (strain ATCC BAA-125 / DSM 18197 / FERM 7344 / JCM 9153 / C-125) (Bacillus halodurans).